The primary structure comprises 109 residues: MASQREENSTQMQNEVVELAYSLARCKLENLLNKSMRIRMTDGRTLVGLFLCTDRDCNVILGSAQEFLKSTDSLSQGEPRVLGLAMIPGHHVVSIEVETESLQTTTHGL.

The region spanning 23–101 (LARCKLENLL…VVSIEVETES (79 aa)) is the Sm domain.

The protein belongs to the snRNP Sm proteins family. Component of the N-terminal acetyltransferase C (NatC) complex.

It is found in the cytoplasm. The protein resides in the nucleus. Functionally, auxillary component of the N-terminal acetyltransferase C (NatC) complex which catalyzes acetylation of N-terminal methionine residues. N-terminal acetylation protects proteins from ubiquitination and degradation by the N-end rule pathway. The polypeptide is N-alpha-acetyltransferase 38, NatC auxiliary subunit (naa38) (Danio rerio (Zebrafish)).